Reading from the N-terminus, the 144-residue chain is Large ribosomal subunit protein uL15 (144 aa).

The interval methionine 1–glutamine 54 is disordered. Residues glycine 22–alanine 31 show a composition bias toward gly residues.

This sequence belongs to the universal ribosomal protein uL15 family. Part of the 50S ribosomal subunit.

Binds to the 23S rRNA. This Hydrogenovibrio crunogenus (strain DSM 25203 / XCL-2) (Thiomicrospira crunogena) protein is Large ribosomal subunit protein uL15.